The sequence spans 201 residues: Lipopolysaccharide core heptose(II)-phosphate phosphatase (201 aa).

The first 35 residues, 1–35 (MLAFTLRFIKNKRYLATLAGALVIIAGLTSQHAWS), serve as a signal peptide directing secretion.

Belongs to the phosphoglycerate mutase family. Ais subfamily.

Its subcellular location is the periplasm. It functions in the pathway bacterial outer membrane biogenesis; lipopolysaccharide metabolism. In terms of biological role, catalyzes the dephosphorylation of heptose(II) of the outer membrane lipopolysaccharide core. The polypeptide is Lipopolysaccharide core heptose(II)-phosphate phosphatase (Salmonella schwarzengrund (strain CVM19633)).